The sequence spans 312 residues: Malate dehydrogenase (312 aa).

NAD(+) contacts are provided by residues 7–13 (GAAGGIG) and Asp34. Substrate-binding residues include Arg81 and Arg87. Residues Asn94 and 117-119 (ITN) contribute to the NAD(+) site. Asn119 and Arg153 together coordinate substrate. The active-site Proton acceptor is the His177. Residue Met227 coordinates NAD(+).

Belongs to the LDH/MDH superfamily. MDH type 1 family. In terms of assembly, homodimer.

The enzyme catalyses (S)-malate + NAD(+) = oxaloacetate + NADH + H(+). Catalyzes the reversible oxidation of malate to oxaloacetate. The polypeptide is Malate dehydrogenase (Moritella marina (Vibrio marinus)).